Here is a 335-residue protein sequence, read N- to C-terminus: Phospho-N-acetylmuramoyl-pentapeptide-transferase (335 aa).

The next 9 membrane-spanning stretches (helical) occupy residues Pro2–Val22, Ile55–Leu75, Cys77–Trp97, Phe118–Gly137, Leu153–Gly173, Val193–Ile213, Ile238–Leu258, Phe263–Val283, and Val313–Phe333.

The protein belongs to the glycosyltransferase 4 family. MraY subfamily. Mg(2+) is required as a cofactor.

Its subcellular location is the cell inner membrane. It carries out the reaction UDP-N-acetyl-alpha-D-muramoyl-L-alanyl-gamma-D-glutamyl-meso-2,6-diaminopimeloyl-D-alanyl-D-alanine + di-trans,octa-cis-undecaprenyl phosphate = di-trans,octa-cis-undecaprenyl diphospho-N-acetyl-alpha-D-muramoyl-L-alanyl-D-glutamyl-meso-2,6-diaminopimeloyl-D-alanyl-D-alanine + UMP. The protein operates within cell wall biogenesis; peptidoglycan biosynthesis. Its function is as follows. Catalyzes the initial step of the lipid cycle reactions in the biosynthesis of the cell wall peptidoglycan: transfers peptidoglycan precursor phospho-MurNAc-pentapeptide from UDP-MurNAc-pentapeptide onto the lipid carrier undecaprenyl phosphate, yielding undecaprenyl-pyrophosphoryl-MurNAc-pentapeptide, known as lipid I. The chain is Phospho-N-acetylmuramoyl-pentapeptide-transferase from Chlamydia muridarum (strain MoPn / Nigg).